Here is a 350-residue protein sequence, read N- to C-terminus: MSDQAVVTLKDVDVEFHGKTRSVHAVDHVDLTVNRGDIYGIVGYSGAGKSTLVRTINLLQRPTGGSVNVLGQDMLALSPAQLRKERKRIGMIFQHFNLMNSRTIADNVAFPLKGLKSKQAIQKKVAELLDLVGLTDRANSYPAQLSGGQKQRVGIARALASDPEILISDEATSALDPKTTSSILELLQSLNQRLGLTIVLITHQMEAVKQICNRVAVMDDGAIIECGDLLQVFSNPQQQLTKDFIDTTLQLDQAIDAVMQQPTVKNLGPDDRLLRLTYVGDSADQPLVAKLFSSYHVTANILFGDIQILQDTPFGNLIVVLSGDHDEVESGIAYLKQQDVKIEDILKKEA.

The region spanning 9–245 is the ABC transporter domain; sequence LKDVDVEFHG…PQQQLTKDFI (237 aa). 43-50 contributes to the ATP binding site; it reads GYSGAGKS.

It belongs to the ABC transporter superfamily. Methionine importer (TC 3.A.1.24) family. The complex is composed of two ATP-binding proteins (MetN), two transmembrane proteins (MetI) and a solute-binding protein (MetQ).

It is found in the cell membrane. The enzyme catalyses L-methionine(out) + ATP + H2O = L-methionine(in) + ADP + phosphate + H(+). It catalyses the reaction D-methionine(out) + ATP + H2O = D-methionine(in) + ADP + phosphate + H(+). Functionally, part of the ABC transporter complex MetNIQ involved in methionine import. Responsible for energy coupling to the transport system. The polypeptide is Methionine import ATP-binding protein MetN (Lacticaseibacillus paracasei (strain ATCC 334 / BCRC 17002 / CCUG 31169 / CIP 107868 / KCTC 3260 / NRRL B-441) (Lactobacillus paracasei)).